A 359-amino-acid polypeptide reads, in one-letter code: 3-dehydroquinate synthase (359 aa).

Residues 105 to 109 (GVVGD), 129 to 130 (TT), Lys142, Lys151, and 169 to 172 (TIKT) each bind NAD(+). Residues Glu184, His247, and His263 each contribute to the Zn(2+) site.

It belongs to the sugar phosphate cyclases superfamily. Dehydroquinate synthase family. Requires Co(2+) as cofactor. Zn(2+) is required as a cofactor. The cofactor is NAD(+).

It localises to the cytoplasm. The enzyme catalyses 7-phospho-2-dehydro-3-deoxy-D-arabino-heptonate = 3-dehydroquinate + phosphate. It participates in metabolic intermediate biosynthesis; chorismate biosynthesis; chorismate from D-erythrose 4-phosphate and phosphoenolpyruvate: step 2/7. Functionally, catalyzes the conversion of 3-deoxy-D-arabino-heptulosonate 7-phosphate (DAHP) to dehydroquinate (DHQ). In Ruminiclostridium cellulolyticum (strain ATCC 35319 / DSM 5812 / JCM 6584 / H10) (Clostridium cellulolyticum), this protein is 3-dehydroquinate synthase.